Reading from the N-terminus, the 164-residue chain is Probable calcium-binding protein CML17 (164 aa).

EF-hand domains are found at residues 4 to 39, 40 to 75, 88 to 123, and 126 to 161; these read DQQA…LGMP, VHRE…VMRV, VDEA…LGIK, and RTAE…GAFA. Ca(2+)-binding residues include Asp17, Asp19, Asp21, Arg23, Glu28, Asp53, Asn55, Asp57, Cys59, Glu64, Asp101, Asn103, Asp105, Glu112, Asp139, Asp141, Asp143, Arg145, and Glu150.

In terms of biological role, potential calcium sensor. The polypeptide is Probable calcium-binding protein CML17 (CML17) (Oryza sativa subsp. japonica (Rice)).